Here is a 101-residue protein sequence, read N- to C-terminus: Urease subunit beta (101 aa).

Belongs to the urease beta subunit family. Heterotrimer of UreA (gamma), UreB (beta) and UreC (alpha) subunits. Three heterotrimers associate to form the active enzyme.

It is found in the cytoplasm. It catalyses the reaction urea + 2 H2O + H(+) = hydrogencarbonate + 2 NH4(+). The protein operates within nitrogen metabolism; urea degradation; CO(2) and NH(3) from urea (urease route): step 1/1. In Paraburkholderia xenovorans (strain LB400), this protein is Urease subunit beta.